Here is a 483-residue protein sequence, read N- to C-terminus: ATP synthase subunit beta, chloroplastic (483 aa).

163–170 (GGAGVGKT) contributes to the ATP binding site.

It belongs to the ATPase alpha/beta chains family. F-type ATPases have 2 components, CF(1) - the catalytic core - and CF(0) - the membrane proton channel. CF(1) has five subunits: alpha(3), beta(3), gamma(1), delta(1), epsilon(1). CF(0) has four main subunits: a(1), b(1), b'(1) and c(9-12).

It is found in the plastid. The protein resides in the chloroplast thylakoid membrane. It catalyses the reaction ATP + H2O + 4 H(+)(in) = ADP + phosphate + 5 H(+)(out). Produces ATP from ADP in the presence of a proton gradient across the membrane. The catalytic sites are hosted primarily by the beta subunits. The protein is ATP synthase subunit beta, chloroplastic of Ostreococcus tauri.